We begin with the raw amino-acid sequence, 303 residues long: ATP phosphoribosyltransferase (303 aa).

The protein belongs to the ATP phosphoribosyltransferase family. Long subfamily. Mg(2+) serves as cofactor.

It localises to the cytoplasm. It carries out the reaction 1-(5-phospho-beta-D-ribosyl)-ATP + diphosphate = 5-phospho-alpha-D-ribose 1-diphosphate + ATP. It participates in amino-acid biosynthesis; L-histidine biosynthesis; L-histidine from 5-phospho-alpha-D-ribose 1-diphosphate: step 1/9. Its activity is regulated as follows. Feedback inhibited by histidine. In terms of biological role, catalyzes the condensation of ATP and 5-phosphoribose 1-diphosphate to form N'-(5'-phosphoribosyl)-ATP (PR-ATP). Has a crucial role in the pathway because the rate of histidine biosynthesis seems to be controlled primarily by regulation of HisG enzymatic activity. This chain is ATP phosphoribosyltransferase, found in Stenotrophomonas maltophilia (strain R551-3).